The following is a 399-amino-acid chain: Beta sliding clamp (399 aa).

The protein belongs to the beta sliding clamp family. As to quaternary structure, forms a ring-shaped head-to-tail homodimer around DNA which binds and tethers DNA polymerases and other proteins to the DNA. The DNA replisome complex has a single clamp-loading complex (3 tau and 1 each of delta, delta', psi and chi subunits) which binds 3 Pol III cores (1 core on the leading strand and 2 on the lagging strand) each with a beta sliding clamp dimer. Additional proteins in the replisome are other copies of gamma, psi and chi, Ssb, DNA helicase and RNA primase.

The protein localises to the cytoplasm. Functionally, confers DNA tethering and processivity to DNA polymerases and other proteins. Acts as a clamp, forming a ring around DNA (a reaction catalyzed by the clamp-loading complex) which diffuses in an ATP-independent manner freely and bidirectionally along dsDNA. Initially characterized for its ability to contact the catalytic subunit of DNA polymerase III (Pol III), a complex, multichain enzyme responsible for most of the replicative synthesis in bacteria; Pol III exhibits 3'-5' exonuclease proofreading activity. The beta chain is required for initiation of replication as well as for processivity of DNA replication. The polypeptide is Beta sliding clamp (dnaN) (Mycolicibacterium paratuberculosis (strain ATCC BAA-968 / K-10) (Mycobacterium paratuberculosis)).